Here is a 373-residue protein sequence, read N- to C-terminus: Enoyl-[acyl-carrier-protein] reductase, mitochondrial (373 aa).

Residues 1–53 (MWVCGALCRTRAPAQLGQRLLPESRRRRPASASFSASAEPSRVRALVYGHHGD) constitute a mitochondrion transit peptide. Lys61 is subject to N6-acetyllysine; alternate. Position 61 is an N6-succinyllysine; alternate (Lys61). Tyr94 functions as the Proton donor in the catalytic mechanism. NADP(+) is bound by residues Asn167, 193–196 (NSGV), and 216–218 (RDT). 2 positions are modified to N6-acetyllysine; alternate: Lys252 and Lys267. 2 positions are modified to N6-succinyllysine; alternate: Lys252 and Lys267. NADP(+) contacts are provided by residues 285–288 (YGGM) and 310–312 (FWL). An N6-succinyllysine modification is found at Lys316. NADP(+) is bound at residue Lys368.

It belongs to the zinc-containing alcohol dehydrogenase family. Quinone oxidoreductase subfamily. Homodimer.

Its subcellular location is the mitochondrion. It carries out the reaction a 2,3-saturated acyl-[ACP] + NADP(+) = a (2E)-enoyl-[ACP] + NADPH + H(+). The catalysed reaction is (2E)-butenoyl-[ACP] + NADPH + H(+) = butanoyl-[ACP] + NADP(+). The enzyme catalyses (2E)-hexenoyl-[ACP] + NADPH + H(+) = hexanoyl-[ACP] + NADP(+). It catalyses the reaction (2E)-octenoyl-[ACP] + NADPH + H(+) = octanoyl-[ACP] + NADP(+). It carries out the reaction (2E)-decenoyl-[ACP] + NADPH + H(+) = decanoyl-[ACP] + NADP(+). The catalysed reaction is (2E)-dodecenoyl-[ACP] + NADPH + H(+) = dodecanoyl-[ACP] + NADP(+). The enzyme catalyses (2E)-tetradecenoyl-[ACP] + NADPH + H(+) = tetradecanoyl-[ACP] + NADP(+). It catalyses the reaction (2E)-hexadecenoyl-[ACP] + NADPH + H(+) = hexadecanoyl-[ACP] + NADP(+). Functionally, catalyzes the NADPH-dependent reduction of trans-2-enoyl thioesters in mitochondrial fatty acid synthesis (fatty acid synthesis type II). Fatty acid chain elongation in mitochondria uses acyl carrier protein (ACP) as an acyl group carrier, but the enzyme accepts both ACP and CoA thioesters as substrates in vitro. Displays a preference for medium-chain over short- and long-chain substrates. May provide the octanoyl chain used for lipoic acid biosynthesis, regulating protein lipoylation and mitochondrial respiratory activity particularly in Purkinje cells. Involved in iron homeostasis; affecting Fe-S cluster assembly and ceramide metabolism. Required for proper morphology and bioenergetic functions of mitochondria. Required for maintenance of neurons. This Bos taurus (Bovine) protein is Enoyl-[acyl-carrier-protein] reductase, mitochondrial (MECR).